A 151-amino-acid chain; its full sequence is Large ribosomal subunit protein bL9 (151 aa).

The protein belongs to the bacterial ribosomal protein bL9 family.

In terms of biological role, binds to the 23S rRNA. This is Large ribosomal subunit protein bL9 from Desulforapulum autotrophicum (strain ATCC 43914 / DSM 3382 / VKM B-1955 / HRM2) (Desulfobacterium autotrophicum).